A 93-amino-acid chain; its full sequence is Putative pterin-4-alpha-carbinolamine dehydratase (93 aa).

This sequence belongs to the pterin-4-alpha-carbinolamine dehydratase family.

The catalysed reaction is (4aS,6R)-4a-hydroxy-L-erythro-5,6,7,8-tetrahydrobiopterin = (6R)-L-erythro-6,7-dihydrobiopterin + H2O. In Mycolicibacterium vanbaalenii (strain DSM 7251 / JCM 13017 / BCRC 16820 / KCTC 9966 / NRRL B-24157 / PYR-1) (Mycobacterium vanbaalenii), this protein is Putative pterin-4-alpha-carbinolamine dehydratase.